Here is a 314-residue protein sequence, read N- to C-terminus: UPF0761 membrane protein VIBHAR_00593 (314 aa).

Helical transmembrane passes span 41-61, 104-124, 143-163, 185-205, 217-237, and 249-269; these read YLAY…LSIL, MTAV…SNID, FSMY…SIAV, FLRW…YFLV, IGAA…AFYI, and ALAA…IVLI.

The protein belongs to the UPF0761 family.

The protein localises to the cell inner membrane. In Vibrio campbellii (strain ATCC BAA-1116), this protein is UPF0761 membrane protein VIBHAR_00593.